The sequence spans 214 residues: Orotate phosphoribosyltransferase (214 aa).

Lysine 26 contacts 5-phospho-alpha-D-ribose 1-diphosphate. 34 to 35 is a binding site for orotate; sequence FF. 5-phospho-alpha-D-ribose 1-diphosphate contacts are provided by residues 72–73, arginine 99, lysine 100, lysine 103, histidine 105, and 124–132; these read YK and DDVITAGTA. Orotate is bound by residues threonine 128 and arginine 156.

This sequence belongs to the purine/pyrimidine phosphoribosyltransferase family. PyrE subfamily. Homodimer. The cofactor is Mg(2+).

It catalyses the reaction orotidine 5'-phosphate + diphosphate = orotate + 5-phospho-alpha-D-ribose 1-diphosphate. It participates in pyrimidine metabolism; UMP biosynthesis via de novo pathway; UMP from orotate: step 1/2. Its function is as follows. Catalyzes the transfer of a ribosyl phosphate group from 5-phosphoribose 1-diphosphate to orotate, leading to the formation of orotidine monophosphate (OMP). The sequence is that of Orotate phosphoribosyltransferase from Mannheimia succiniciproducens (strain KCTC 0769BP / MBEL55E).